Consider the following 546-residue polypeptide: uncharacterized protein (546 aa).

Belongs to the IIV-6 098R family.

This is an uncharacterized protein from Aedes vexans (Inland floodwater mosquito).